A 257-amino-acid polypeptide reads, in one-letter code: LexA repressor (257 aa).

The segment at residues 64–84 is a DNA-binding region (H-T-H motif); it reads FREIGEAAGLKSPSSVKHQLQ. Catalysis depends on for autocatalytic cleavage activity residues Ser181 and Lys218.

It belongs to the peptidase S24 family. Homodimer.

It catalyses the reaction Hydrolysis of Ala-|-Gly bond in repressor LexA.. In terms of biological role, represses a number of genes involved in the response to DNA damage (SOS response), including recA and lexA. In the presence of single-stranded DNA, RecA interacts with LexA causing an autocatalytic cleavage which disrupts the DNA-binding part of LexA, leading to derepression of the SOS regulon and eventually DNA repair. This chain is LexA repressor, found in Bifidobacterium adolescentis (strain ATCC 15703 / DSM 20083 / NCTC 11814 / E194a).